The primary structure comprises 280 residues: Ribulose-phosphate 3-epimerase, chloroplastic (280 aa).

The transit peptide at 1–45 (SLGSSTLLQSQISGFGGSQKLQKISFSNPNSLTFTRRRIQTVVNA) directs the protein to the chloroplast. Residue serine 62 participates in substrate binding. 3 residues coordinate a divalent metal cation: histidine 87, aspartate 89, and histidine 120. The Proton acceptor role is filled by aspartate 89. Substrate contacts are provided by residues histidine 120, 198 to 201 (GFGG), 231 to 233 (DGG), and 253 to 254 (GS). Aspartate 231 lines the a divalent metal cation pocket. The active-site Proton donor is the aspartate 231.

The protein belongs to the ribulose-phosphate 3-epimerase family. In terms of assembly, homohexamer. The cofactor is Co(2+). Fe(2+) is required as a cofactor. Mn(2+) serves as cofactor. Requires Zn(2+) as cofactor. Highest level of expression in leaves, whereas it is low in roots, tubers, and stems.

The protein localises to the plastid. It is found in the chloroplast thylakoid membrane. It catalyses the reaction D-ribulose 5-phosphate = D-xylulose 5-phosphate. It functions in the pathway carbohydrate biosynthesis; Calvin cycle. Catalyzes the reversible epimerization of D-ribulose 5-phosphate to D-xylulose 5-phosphate. This chain is Ribulose-phosphate 3-epimerase, chloroplastic, found in Solanum tuberosum (Potato).